We begin with the raw amino-acid sequence, 159 residues long: 2-C-methyl-D-erythritol 2,4-cyclodiphosphate synthase (159 aa).

A divalent metal cation is bound by residues Asp-10 and His-12. 4-CDP-2-C-methyl-D-erythritol 2-phosphate is bound by residues 10–12 and 36–37; these read DVH and HS. His-44 serves as a coordination point for a divalent metal cation. 4-CDP-2-C-methyl-D-erythritol 2-phosphate is bound by residues 58–60, 134–137, Phe-141, and Arg-144; these read DIG and TTTE.

The protein belongs to the IspF family. Homotrimer. Requires a divalent metal cation as cofactor.

It catalyses the reaction 4-CDP-2-C-methyl-D-erythritol 2-phosphate = 2-C-methyl-D-erythritol 2,4-cyclic diphosphate + CMP. It participates in isoprenoid biosynthesis; isopentenyl diphosphate biosynthesis via DXP pathway; isopentenyl diphosphate from 1-deoxy-D-xylulose 5-phosphate: step 4/6. Involved in the biosynthesis of isopentenyl diphosphate (IPP) and dimethylallyl diphosphate (DMAPP), two major building blocks of isoprenoid compounds. Catalyzes the conversion of 4-diphosphocytidyl-2-C-methyl-D-erythritol 2-phosphate (CDP-ME2P) to 2-C-methyl-D-erythritol 2,4-cyclodiphosphate (ME-CPP) with a corresponding release of cytidine 5-monophosphate (CMP). This Bacteroides fragilis (strain YCH46) protein is 2-C-methyl-D-erythritol 2,4-cyclodiphosphate synthase.